A 149-amino-acid polypeptide reads, in one-letter code: Large ribosomal subunit protein uL13 (149 aa).

This sequence belongs to the universal ribosomal protein uL13 family. Part of the 50S ribosomal subunit.

Its function is as follows. This protein is one of the early assembly proteins of the 50S ribosomal subunit, although it is not seen to bind rRNA by itself. It is important during the early stages of 50S assembly. This Borrelia turicatae (strain 91E135) protein is Large ribosomal subunit protein uL13.